The following is a 535-amino-acid chain: Probable acyl-activating enzyme 22 (535 aa).

Belongs to the ATP-dependent AMP-binding enzyme family.

In terms of biological role, may act as an acid--thiol ligase that activates carboxylic acids by forming acyl-CoAs. This is Probable acyl-activating enzyme 22 (AEE22) from Arabidopsis thaliana (Mouse-ear cress).